The sequence spans 676 residues: RNA helicase NPH-II (676 aa).

In terms of domain architecture, Helicase ATP-binding spans 172–347 (FSAWISHRPV…VFLPNPAFIH (176 aa)). An ATP-binding site is contributed by 185-192 (GGTGVGKT). The short motif at 296 to 299 (DEVH) is the DEXH box element. A Helicase C-terminal domain is found at 366–535 (NPSSRMAYIE…NYILYANKFN (170 aa)).

It belongs to the DEAD box helicase family. DEAH subfamily. In terms of assembly, monomer.

Its subcellular location is the virion. It carries out the reaction ATP + H2O = ADP + phosphate + H(+). NTP-dependent helicase that catalyzes unidirectional unwinding of 3'tailed duplex RNAs and plays an important role during transcription of early mRNAs, presumably by preventing R-loop formation behind the elongating RNA polymerase. Might also play a role in the export of newly synthesized mRNA chains out of the core into the cytoplasm. Required for replication and propagation of viral particles. The polypeptide is RNA helicase NPH-II (OPG084) (Bos taurus (Bovine)).